We begin with the raw amino-acid sequence, 122 residues long: Large ribosomal subunit protein uL14 (122 aa).

This sequence belongs to the universal ribosomal protein uL14 family. In terms of assembly, part of the 50S ribosomal subunit. Forms a cluster with proteins L3 and L19. In the 70S ribosome, L14 and L19 interact and together make contacts with the 16S rRNA in bridges B5 and B8.

In terms of biological role, binds to 23S rRNA. Forms part of two intersubunit bridges in the 70S ribosome. The protein is Large ribosomal subunit protein uL14 of Elusimicrobium minutum (strain Pei191).